The sequence spans 415 residues: Carbamoyl phosphate synthase arginine-specific small chain (415 aa).

The N-terminal 17 residues, Met-1–Tyr-17, are a transit peptide targeting the mitochondrion. The L-glutamine site is built by Ser-88, Gly-272, and Gly-274. One can recognise a Glutamine amidotransferase type-1 domain in the interval Asn-225–Ser-412. The Nucleophile role is filled by Cys-301. The L-glutamine site is built by Met-302, Gln-305, Asn-343, Gly-345, and Tyr-346. Active-site residues include His-385 and Glu-387.

This sequence belongs to the CarA family. In terms of assembly, heterodimer composed of 2 chains; the small (or glutamine) chain promotes the hydrolysis of glutamine to ammonia, which is used by the large (or ammonia) chain to synthesize carbamoyl phosphate.

The protein resides in the mitochondrion. It is found in the cytoplasm. It catalyses the reaction hydrogencarbonate + L-glutamine + 2 ATP + H2O = carbamoyl phosphate + L-glutamate + 2 ADP + phosphate + 2 H(+). The catalysed reaction is L-glutamine + H2O = L-glutamate + NH4(+). It functions in the pathway amino-acid biosynthesis; L-arginine biosynthesis; carbamoyl phosphate from bicarbonate: step 1/1. Its function is as follows. Small subunit of the arginine-specific carbamoyl phosphate synthase (CPSase). CPSase catalyzes the formation of carbamoyl phosphate from the ammonia moiety of glutamine, carbonate, and phosphate donated by ATP, the first step of the arginine biosynthetic pathway. The small subunit (glutamine amidotransferase) binds and cleaves glutamine to supply the large subunit with the substrate ammonia. This is Carbamoyl phosphate synthase arginine-specific small chain (arg5) from Schizosaccharomyces pombe (strain 972 / ATCC 24843) (Fission yeast).